A 169-amino-acid polypeptide reads, in one-letter code: Phosphopantetheine adenylyltransferase (169 aa).

Residue Thr14 participates in substrate binding. Residues Thr14–Phe15 and His22 contribute to the ATP site. Positions 46, 78, and 92 each coordinate substrate. Residues Gly93–Arg95, Glu103, and His128–Ser134 contribute to the ATP site.

It belongs to the bacterial CoaD family. As to quaternary structure, homohexamer. Requires Mg(2+) as cofactor.

It localises to the cytoplasm. It catalyses the reaction (R)-4'-phosphopantetheine + ATP + H(+) = 3'-dephospho-CoA + diphosphate. The protein operates within cofactor biosynthesis; coenzyme A biosynthesis; CoA from (R)-pantothenate: step 4/5. Functionally, reversibly transfers an adenylyl group from ATP to 4'-phosphopantetheine, yielding dephospho-CoA (dPCoA) and pyrophosphate. The polypeptide is Phosphopantetheine adenylyltransferase (Stenotrophomonas maltophilia (strain K279a)).